A 410-amino-acid chain; its full sequence is MDLIEEAIKLESDLIRINSVNPSFGGKGEKEKAEYVKKKLMEYVESYNIENYTLKEYNIIDKYGIERPNIVFKIDFGRDKTLHIISHLDTVPEGDISLWGTNPYEPVIKDGKIYGRGSEDNHKGIVSSLLLLKMIFENNIEPKYNLSLIFVSDEEDGSEYGLKYLLNNFEDEIFKKDDLIIVPDFGTPTGEFVEIGEKGILWIKFNIKGKQCHGSTPENGLNADIVAFNFANELYNGLYEKFDEINSIFLPEYSTFEPTILKNKVENPNTIPGYVEVVFDCRILPTYKIEEVLEFINKFIKNFEFKKYIKHYDNSIKAEITYEILKSENPNYTDENAEIIKELKKAIKNVLNRDAKLCGMGGGTVAAFLRYKGYNVAVWGIGEETAHQPNEHIKIEDLVKMAEVFYEILK.

Residue H87 coordinates Zn(2+). Residue D89 is part of the active site. D120 is a binding site for Zn(2+). Residue E154 is the Proton acceptor of the active site. Residues E155, D184, and H387 each coordinate Zn(2+).

It belongs to the peptidase M20A family. Zn(2+) serves as cofactor. It depends on Co(2+) as a cofactor.

This is an uncharacterized protein from Methanocaldococcus jannaschii (strain ATCC 43067 / DSM 2661 / JAL-1 / JCM 10045 / NBRC 100440) (Methanococcus jannaschii).